The sequence spans 128 residues: Azurin (128 aa).

The Plastocyanin-like domain occupies 1–128 (AECSVDIQGN…AMMKGTLTLK (128 aa)). 4 residues coordinate Cu cation: H46, C112, H117, and M121.

The protein localises to the periplasm. Its function is as follows. Transfers electrons from cytochrome c551 to cytochrome oxidase. The sequence is that of Azurin from Pseudomonas denitrificans.